The sequence spans 91 residues: UPF0250 protein Pfl01_4965 (91 aa).

It belongs to the UPF0250 family.

The chain is UPF0250 protein Pfl01_4965 from Pseudomonas fluorescens (strain Pf0-1).